The primary structure comprises 415 residues: Meiotic driver wtf36 (415 aa).

Disordered stretches follow at residues 1–49 (MKNK…DLNN) and 67–99 (TTPP…SGTA). Residues 11-29 (SMDEMSAKNDNEIDLEKGP) show a composition bias toward basic and acidic residues. The next 7 helical transmembrane spans lie at 105 to 125 (FLIK…PAVC), 142 to 162 (WTLF…LTYF), 169 to 189 (AVKV…IFLA), 205 to 225 (VTAI…AQCV), 240 to 260 (VVII…RSKF), 274 to 294 (CSIS…FWTL), and 298 to 318 (FSGL…TKGL).

This sequence belongs to the WTF family. Homomer. Forms protein aggregates. The two isoforms can interact with each other and with themselves. High sequence similarity is required for their interaction.

Its subcellular location is the spore membrane. It is found in the vacuole membrane. It localises to the ascus epiplasm. The protein resides in the cytoplasm. The protein localises to the endoplasmic reticulum membrane. Promotes unequal transmission of alleles from the parental zygote to progeny spores by acting as poison/antidote system where the poison and antidote proteins are produced from the same locus; the poison component is trans-acting and targets all spores within an ascus whereas the antidote component is spore-specific, leading to poisoning of all progeny that do not inherit the allele. Functionally, localizes isoform 2 to the vacuole thereby facilitating its degradation. Its function is as follows. Forms toxic aggregates that disrupt spore maturation. The protein is Meiotic driver wtf36 of Schizosaccharomyces pombe (Fission yeast).